The sequence spans 330 residues: Phenylalanine--tRNA ligase alpha subunit (330 aa).

Glu257 is a Mg(2+) binding site.

The protein belongs to the class-II aminoacyl-tRNA synthetase family. Phe-tRNA synthetase alpha subunit type 1 subfamily. As to quaternary structure, tetramer of two alpha and two beta subunits. The cofactor is Mg(2+).

It localises to the cytoplasm. The enzyme catalyses tRNA(Phe) + L-phenylalanine + ATP = L-phenylalanyl-tRNA(Phe) + AMP + diphosphate + H(+). In Nostoc punctiforme (strain ATCC 29133 / PCC 73102), this protein is Phenylalanine--tRNA ligase alpha subunit.